Reading from the N-terminus, the 436-residue chain is Methylenetetrahydrofolate--tRNA-(uracil-5-)-methyltransferase TrmFO (436 aa).

FAD is bound at residue 8-13; the sequence is GAGLAG.

This sequence belongs to the MnmG family. TrmFO subfamily. Requires FAD as cofactor.

Its subcellular location is the cytoplasm. The enzyme catalyses uridine(54) in tRNA + (6R)-5,10-methylene-5,6,7,8-tetrahydrofolate + NADH + H(+) = 5-methyluridine(54) in tRNA + (6S)-5,6,7,8-tetrahydrofolate + NAD(+). The catalysed reaction is uridine(54) in tRNA + (6R)-5,10-methylene-5,6,7,8-tetrahydrofolate + NADPH + H(+) = 5-methyluridine(54) in tRNA + (6S)-5,6,7,8-tetrahydrofolate + NADP(+). In terms of biological role, catalyzes the folate-dependent formation of 5-methyl-uridine at position 54 (M-5-U54) in all tRNAs. The chain is Methylenetetrahydrofolate--tRNA-(uracil-5-)-methyltransferase TrmFO from Persephonella marina (strain DSM 14350 / EX-H1).